We begin with the raw amino-acid sequence, 314 residues long: Homoserine O-succinyltransferase (314 aa).

The Acyl-thioester intermediate role is filled by cysteine 142. Lysine 163 and serine 192 together coordinate substrate. The active-site Proton acceptor is the histidine 235. The active site involves glutamate 237. Position 249 (arginine 249) interacts with substrate.

Belongs to the MetA family.

The protein localises to the cytoplasm. It carries out the reaction L-homoserine + succinyl-CoA = O-succinyl-L-homoserine + CoA. It functions in the pathway amino-acid biosynthesis; L-methionine biosynthesis via de novo pathway; O-succinyl-L-homoserine from L-homoserine: step 1/1. Functionally, transfers a succinyl group from succinyl-CoA to L-homoserine, forming succinyl-L-homoserine. The chain is Homoserine O-succinyltransferase from Photobacterium profundum (strain SS9).